The primary structure comprises 196 residues: dTDP-4-dehydro-6-deoxyglucose 3-epimerase (196 aa).

Residues R21, E26, 45–47 (QVN), and R57 each bind substrate. The Proton acceptor role is filled by H60. 2 residues coordinate substrate: K70 and R117. Residue Y130 is the Proton donor of the active site. 2 residues coordinate substrate: E141 and R166.

This sequence belongs to the dTDP-4-dehydrorhamnose 3,5-epimerase family. In terms of assembly, homodimer.

The catalysed reaction is dTDP-4-dehydro-6-deoxy-alpha-D-glucose = dTDP-4-dehydro-6-deoxy-alpha-D-allose. The protein operates within antibiotic biosynthesis. In terms of biological role, involved in the biosynthesis of dTDP-6-deoxy-D-allose, an intermediate in the biosynthesis of mycinose, which is one of the two unusual sugars attached to the 16-membered macrolactone ring of the aglycone antibiotic chalcomycin. Catalyzes the conversion of dTDP-4-oxo-6-deoxyglucose to dTDP-4-oxo-6-deoxyallose, via a C-3 epimerization. The sequence is that of dTDP-4-dehydro-6-deoxyglucose 3-epimerase from Streptomyces bikiniensis.